The following is a 160-amino-acid chain: Cytochrome b6-f complex subunit 4 (160 aa).

A run of 3 helical transmembrane segments spans residues 36–56 (LLYI…GLAV), 95–115 (LLGI…PFIE), and 131–151 (AVFL…TLPI).

It belongs to the cytochrome b family. PetD subfamily. The 4 large subunits of the cytochrome b6-f complex are cytochrome b6, subunit IV (17 kDa polypeptide, PetD), cytochrome f and the Rieske protein, while the 4 small subunits are PetG, PetL, PetM and PetN. The complex functions as a dimer.

Its subcellular location is the cellular thylakoid membrane. Component of the cytochrome b6-f complex, which mediates electron transfer between photosystem II (PSII) and photosystem I (PSI), cyclic electron flow around PSI, and state transitions. In Trichodesmium erythraeum (strain IMS101), this protein is Cytochrome b6-f complex subunit 4.